The following is a 303-amino-acid chain: Acetaldehyde dehydrogenase (303 aa).

Catalysis depends on Cys-131, which acts as the Acyl-thioester intermediate. Residues 162 to 170 and Asn-273 contribute to the NAD(+) site; that span reads SVGPGTRAN.

It belongs to the acetaldehyde dehydrogenase family.

It carries out the reaction acetaldehyde + NAD(+) + CoA = acetyl-CoA + NADH + H(+). This Marinomonas sp. (strain MWYL1) protein is Acetaldehyde dehydrogenase.